A 411-amino-acid polypeptide reads, in one-letter code: Probable protein S-acyltransferase 2 (411 aa).

2 helical membrane passes run 56–76 (LTTAMIGGPALTFCIRMVFLI) and 85–105 (SLILLGALLLTVLDFTFLFLT). One can recognise a DHHC domain in the interval 160 to 210 (KFCDTCLLYRPPRASHCSICNNCVQRFDHHCPWVGQCIALRNYPYFICFIS). Residue C190 is the S-palmitoyl cysteine intermediate of the active site. A run of 2 helical transmembrane segments spans residues 205-225 (FICFISTSTLLCLYVFVFSWV) and 245-265 (FVVLILYCFVVVWFVGGLTVF). Residue S405 is modified to Phosphoserine.

It belongs to the DHHC palmitoyltransferase family. Expressed in flowers and pollen.

It localises to the cytoplasmic vesicle membrane. It catalyses the reaction L-cysteinyl-[protein] + hexadecanoyl-CoA = S-hexadecanoyl-L-cysteinyl-[protein] + CoA. In terms of biological role, palmitoyl acyltransferase. The chain is Probable protein S-acyltransferase 2 (PAT02) from Arabidopsis thaliana (Mouse-ear cress).